The primary structure comprises 89 residues: Large ribosomal subunit protein bL27 (89 aa).

The interval 1–21 (MAHKKAGGSSRNGRDSKGKRL) is disordered.

This sequence belongs to the bacterial ribosomal protein bL27 family.

This is Large ribosomal subunit protein bL27 from Bradyrhizobium sp. (strain BTAi1 / ATCC BAA-1182).